A 525-amino-acid chain; its full sequence is GMP synthase [glutamine-hydrolyzing] (525 aa).

The 199-residue stretch at 9-207 folds into the Glutamine amidotransferase type-1 domain; the sequence is RILILDFGSQ…VRDICQCEAL (199 aa). The Nucleophile role is filled by Cys86. Catalysis depends on residues His181 and Glu183. Residues 208 to 400 enclose the GMPS ATP-PPase domain; sequence WTPAKIIDDA…LGLPYNMLYR (193 aa). 235–241 provides a ligand contact to ATP; the sequence is SGGVDSS.

In terms of assembly, homodimer.

The enzyme catalyses XMP + L-glutamine + ATP + H2O = GMP + L-glutamate + AMP + diphosphate + 2 H(+). Its pathway is purine metabolism; GMP biosynthesis; GMP from XMP (L-Gln route): step 1/1. In terms of biological role, catalyzes the synthesis of GMP from XMP. The sequence is that of GMP synthase [glutamine-hydrolyzing] from Pectobacterium carotovorum subsp. carotovorum (strain PC1).